A 732-amino-acid polypeptide reads, in one-letter code: Aldehyde oxidoreductase molybdenum-binding subunit PaoC (732 aa).

Residues Gly241–Phe242, Ile468–Thr470, Gly511–Ala512, Arg615–Thr621, Gln625, and Lys688–Gly691 each bind Mo-molybdopterin cytosine dinucleotide. The Proton acceptor role is filled by Glu692.

Belongs to the xanthine dehydrogenase family. As to quaternary structure, heterotrimer composed of PaoA, PaoB and PaoC. Mo-molybdopterin cytosine dinucleotide is required as a cofactor.

It is found in the periplasm. It carries out the reaction an aldehyde + A + H2O = a carboxylate + AH2 + H(+). The complex requires PaoD for activity. Oxidizes aldehydes to the corresponding carboxylic acids with a preference for aromatic aldehydes. It might play a role in the detoxification of aldehydes to avoid cell damage. The chain is Aldehyde oxidoreductase molybdenum-binding subunit PaoC from Escherichia coli (strain K12).